The chain runs to 144 residues: Gonadotropin subunit beta-2 (144 aa).

An N-terminal signal peptide occupies residues 1 to 27; sequence MGTPVKILVVRNHILFSVVVLLAVAQS. 6 disulfides stabilise this stretch: cysteine 33–cysteine 81, cysteine 47–cysteine 96, cysteine 50–cysteine 134, cysteine 58–cysteine 112, cysteine 62–cysteine 114, and cysteine 117–cysteine 124. The N-linked (GlcNAc...) asparagine glycan is linked to asparagine 37. Residues 143–144 constitute a propeptide that is removed on maturation; it reads VY.

The protein belongs to the glycoprotein hormones subunit beta family. Heterodimer of an alpha and a beta chain.

The protein resides in the secreted. In terms of biological role, involved in gametogenesis and steroidogenesis. In Cyprinus carpio (Common carp), this protein is Gonadotropin subunit beta-2 (cgbb).